The following is a 403-amino-acid chain: Phosphoserine phosphatase RsbP (403 aa).

The PAS domain maps to 1-42; sequence MDKQLNDAPCGFLALSEEGSIIAANRTLIKILDYEPEQVIGQ. One can recognise a PPM-type phosphatase domain in the interval 191-402; sequence QVQIDSYYNA…DDECFILVDV (212 aa).

The cofactor is Mn(2+).

It carries out the reaction O-phospho-L-serine + H2O = L-serine + phosphate. The enzyme catalyses O-phospho-D-serine + H2O = D-serine + phosphate. Positive regulator of sigma-B activity. Dephosphorylates RsbV in response to energy stress. This is Phosphoserine phosphatase RsbP (rsbP) from Bacillus subtilis (strain 168).